The following is a 224-amino-acid chain: UPF0758 protein HEAR2468 (224 aa).

Residues 102 to 224 enclose the MPN domain; the sequence is ALNSPQAVKQ…VYSFAEQGQL (123 aa). Histidine 173, histidine 175, and aspartate 186 together coordinate Zn(2+). Positions 173 to 186 match the JAMM motif motif; that stretch reads HNHPSGTPEPSAAD.

It belongs to the UPF0758 family.

The chain is UPF0758 protein HEAR2468 from Herminiimonas arsenicoxydans.